The primary structure comprises 57 residues: Potassium channel toxin alpha-KTx 4.2 (57 aa).

The N-terminal stretch at 1 to 20 (MKVLYGILIIFILCSMFYLS) is a signal peptide. Positions 21–22 (QE) are cleaved as a propeptide — removed by a carboxypeptidase. 3 disulfide bridges follow: Cys-29-Cys-50, Cys-35-Cys-55, and Cys-39-Cys-57.

Belongs to the short scorpion toxin superfamily. Potassium channel inhibitor family. Alpha-KTx 04 subfamily. Expressed by the venom gland.

The protein localises to the secreted. In terms of biological role, blocker for small-conductance calcium-activated potassium channels KCa2.2/KCNN2 (Kd=80 nM) and KCa2.3/KCNN3 (Kd=197 nM) and ERG1/Kv11.1/KCNH2 potassium channels (53% inhibition at 5 uM). Has also been shown to inhibit Kv1.1/KCNA1 and Nav1.7/SCN9A with a moderate potency, as well as Kv11.1/KCNH2/ERG1 and Kv1.2/KCNA2 with a low potency. The sequence is that of Potassium channel toxin alpha-KTx 4.2 from Tityus serrulatus (Brazilian scorpion).